Consider the following 107-residue polypeptide: Replication restart protein PriB (107 aa).

Residues 8–107 form the SSB domain; it reads IENRLSLIGV…LHAEHIELLD (100 aa).

The protein belongs to the PriB family. Homodimer. Interacts with PriA and DnaT. Component of the replication restart primosome. Primosome assembly occurs via a 'hand-off' mechanism. PriA binds to replication forks, subsequently PriB then DnaT bind; DnaT then displaces ssDNA to generate the helicase loading substrate.

In terms of biological role, involved in the restart of stalled replication forks, which reloads the replicative helicase on sites other than the origin of replication; the PriA-PriB pathway is the major replication restart pathway. During primosome assembly it facilitates complex formation between PriA and DnaT on DNA; stabilizes PriA on DNA. Stimulates the DNA unwinding activity of PriA helicase. In Actinobacillus succinogenes (strain ATCC 55618 / DSM 22257 / CCUG 43843 / 130Z), this protein is Replication restart protein PriB.